We begin with the raw amino-acid sequence, 605 residues long: MKKHTESYWEGVVKSMGLVFGDIGTSPIYTLTVIFALTKPTEANVFGILSMVVWTLIILVTVEYAWLAMSLGRKGEGGTIVLKEILIRLLKPGRQIAFVGFLSFVGVSLLLGDGVITPAISILSAVEGLVLIPGLESMRLGTLILIAALIAVVLFIFQFKGTDKVAAAFGPLMVLWFGALTVSGLVSIATFPKILGAVSPHYAINFFRDNGISAFFVLSEVILCATGGEALYADMGHLGRRPIIRAWYFVFVALIINYLGQGAFALQHGDAKNFLFNMVQGQSQLLYIPFLILTILATVIASQALISGVFSIVYQGITTRIMPLMKVDYTSSHLKSQIYIGSVNWFLMLLVIFIMLIFQKSENLAAAYGLAVTGTMTITGIMMTIIFAHTTKKWKVPVAVAVTIVDVVFLISNLNKLPHGGYWSIILASVPFATILIWTKGQQALYRALKPLDMETFLLSYEQIYAKGKNITGTGLFFTREWNVIPPYVVHCIIRSNIIYERNIFISIVRTDEPFGLKSELKTGFGPGLDAFEIKAGYMEVIDIEKLLKKHDIQEKVIFYGIEDIATMNPVWRVFSVIKKLTPNFVQFNKLPASKLQGVVTRVEM.

12 helical membrane passes run 17–37, 45–65, 96–116, 140–160, 165–185, 211–231, 246–266, 286–306, 338–358, 367–387, 394–414, and 417–437; these read GLVFGDIGTSPIYTLTVIFAL, VFGILSMVVWTLIILVTVEYA, IAFVGFLSFVGVSLLLGDGVI, LGTLILIAALIAVVLFIFQFK, VAAAFGPLMVLWFGALTVSGL, GISAFFVLSEVILCATGGEAL, AWYFVFVALIINYLGQGAFAL, LYIPFLILTILATVIASQALI, IYIGSVNWFLMLLVIFIMLIF, AYGLAVTGTMTITGIMMTIIF, WKVPVAVAVTIVDVVFLISNL, and LPHGGYWSIILASVPFATILI.

Belongs to the HAK/KUP transporter (TC 2.A.72) family.

The protein resides in the cell inner membrane. It carries out the reaction K(+)(in) + H(+)(in) = K(+)(out) + H(+)(out). In terms of biological role, transport of potassium into the cell. Likely operates as a K(+):H(+) symporter. The sequence is that of Probable potassium transport system protein Kup from Geotalea uraniireducens (strain Rf4) (Geobacter uraniireducens).